The chain runs to 678 residues: PTS system glucose-specific EIICBA component (678 aa).

The 412-residue stretch at 3–414 (KKLFGQLQRI…FKYKTPGRED (412 aa)) folds into the PTS EIIC type-1 domain. The next 11 helical transmembrane spans lie at 16-36 (LMLP…GTAM), 63-83 (AGGI…AIGL), 89-109 (VAAI…GAFL), 126-146 (VLGI…GALA), 170-190 (FVPI…AWIW), 211-231 (LAVF…LHHI), 273-293 (FMQG…LAIY), 303-323 (VVAG…ITEP), 329-349 (LFVA…SFLI), 355-375 (VHLG…GVLP), and 382-402 (LVIP…RFLI). The 82-residue stretch at 425 to 506 (SELPFNVLKA…SLIMKGEITK (82 aa)) folds into the PTS EIIB type-1 domain. Cysteine 447 (phosphocysteine intermediate; for EIIB activity) is an active-site residue. In terms of domain architecture, PTS EIIA type-1 spans 547–651 (DQVFAQKMMG…STVTPLIITN (105 aa)). Histidine 599 (tele-phosphohistidine intermediate; for EIIA activity) is an active-site residue.

It is found in the cell membrane. The catalysed reaction is N(pros)-phospho-L-histidyl-[protein] + D-glucose(out) = D-glucose 6-phosphate(in) + L-histidyl-[protein]. Its function is as follows. The phosphoenolpyruvate-dependent sugar phosphotransferase system (sugar PTS), a major carbohydrate active transport system, catalyzes the phosphorylation of incoming sugar substrates concomitantly with their translocation across the cell membrane. This system is involved in glucose transport. This Staphylococcus saprophyticus subsp. saprophyticus (strain ATCC 15305 / DSM 20229 / NCIMB 8711 / NCTC 7292 / S-41) protein is PTS system glucose-specific EIICBA component (ptsG).